A 62-amino-acid chain; its full sequence is Sperm protamine P1 (62 aa).

A disordered region spans residues 1–62 (MARYRHSXSR…RYSRRRRRRY (62 aa)).

It belongs to the protamine P1 family. As to expression, testis.

The protein resides in the nucleus. The protein localises to the chromosome. In terms of biological role, protamines substitute for histones in the chromatin of sperm during the haploid phase of spermatogenesis. They compact sperm DNA into a highly condensed, stable and inactive complex. This Petrogale xanthopus (Yellow-footed rock wallaby) protein is Sperm protamine P1 (PRM1).